Reading from the N-terminus, the 172-residue chain is uncharacterized protein (172 aa).

This is an uncharacterized protein from Mycoplasma pneumoniae (strain ATCC 29342 / M129 / Subtype 1) (Mycoplasmoides pneumoniae).